A 271-amino-acid polypeptide reads, in one-letter code: MTYLQESSRPAVTVPKLQAMREAGEKIAMLTCYDASFAALLDRANVDVQLIGDSLGNVLQGQTTTLPVTLDDIAYHTACVARAQPRALIVADLPFGTYGTPADAFASAVKLMRAGAQMVKFEGGEWLAETVRFLVERAVPVCAHVGLTPQSVHAFGGFKVQGKTEAGAAQLLRDARAVEEAGAQLIVLEAVPTLVAAEVTRELSIPTIGIGAGAECSGQVLVLHDMLGVFPGKRPRFVKDFMQGQPSIFAAVEAYVRAVKDGSFPGPEHSF.

The Mg(2+) site is built by Asp53 and Asp92. Residues 53–54 (DS), Asp92, and Lys120 each bind 3-methyl-2-oxobutanoate. Glu122 contributes to the Mg(2+) binding site. The active-site Proton acceptor is Glu189.

The protein belongs to the PanB family. Homodecamer; pentamer of dimers. It depends on Mg(2+) as a cofactor.

It localises to the cytoplasm. It catalyses the reaction 3-methyl-2-oxobutanoate + (6R)-5,10-methylene-5,6,7,8-tetrahydrofolate + H2O = 2-dehydropantoate + (6S)-5,6,7,8-tetrahydrofolate. It participates in cofactor biosynthesis; (R)-pantothenate biosynthesis; (R)-pantoate from 3-methyl-2-oxobutanoate: step 1/2. Functionally, catalyzes the reversible reaction in which hydroxymethyl group from 5,10-methylenetetrahydrofolate is transferred onto alpha-ketoisovalerate to form ketopantoate. This chain is 3-methyl-2-oxobutanoate hydroxymethyltransferase, found in Burkholderia thailandensis (strain ATCC 700388 / DSM 13276 / CCUG 48851 / CIP 106301 / E264).